Consider the following 92-residue polypeptide: Small ribosomal subunit protein uS19c (92 aa).

Belongs to the universal ribosomal protein uS19 family. As to quaternary structure, component of the chloroplast small ribosomal subunit (SSU). Mature 70S chloroplast ribosomes of higher plants consist of a small (30S) and a large (50S) subunit. The 30S small subunit contains 1 molecule of ribosomal RNA (16S rRNA) and 24 different proteins. The 50S large subunit contains 3 rRNA molecules (23S, 5S and 4.5S rRNA) and 33 different proteins. uS19c binds directly to 16S ribosomal RNA.

Its subcellular location is the plastid. The protein localises to the chloroplast. Its function is as follows. Component of the chloroplast ribosome (chloro-ribosome), a dedicated translation machinery responsible for the synthesis of chloroplast genome-encoded proteins, including proteins of the transcription and translation machinery and components of the photosynthetic apparatus. In Spinacia oleracea (Spinach), this protein is Small ribosomal subunit protein uS19c (rps19).